We begin with the raw amino-acid sequence, 284 residues long: Bifunctional protein FolD 2 (284 aa).

NADP(+)-binding positions include 164 to 166 (GRG), serine 189, and isoleucine 230.

Belongs to the tetrahydrofolate dehydrogenase/cyclohydrolase family. In terms of assembly, homodimer.

It carries out the reaction (6R)-5,10-methylene-5,6,7,8-tetrahydrofolate + NADP(+) = (6R)-5,10-methenyltetrahydrofolate + NADPH. The catalysed reaction is (6R)-5,10-methenyltetrahydrofolate + H2O = (6R)-10-formyltetrahydrofolate + H(+). It functions in the pathway one-carbon metabolism; tetrahydrofolate interconversion. In terms of biological role, catalyzes the oxidation of 5,10-methylenetetrahydrofolate to 5,10-methenyltetrahydrofolate and then the hydrolysis of 5,10-methenyltetrahydrofolate to 10-formyltetrahydrofolate. The sequence is that of Bifunctional protein FolD 2 from Desulfitobacterium hafniense (strain Y51).